We begin with the raw amino-acid sequence, 191 residues long: Prostaglandin-H2 D-isomerase (191 aa).

The first 28 residues, methionine 1 to alanine 28, serve as a signal peptide directing secretion. Residue asparagine 51 is glycosylated (N-linked (GlcNAc...) asparagine). The active-site Nucleophile is the cysteine 65. N-linked (GlcNAc...) asparagine glycosylation occurs at asparagine 78. Cysteine 89 and cysteine 186 are disulfide-bonded.

Belongs to the calycin superfamily. Lipocalin family. Monomer. In the male reproductive system, expressed in the testis, epididymis and prostate, and secreted into the seminal fluid.

It localises to the rough endoplasmic reticulum. The protein resides in the nucleus membrane. It is found in the golgi apparatus. Its subcellular location is the cytoplasm. The protein localises to the perinuclear region. It localises to the secreted. It carries out the reaction prostaglandin H2 = prostaglandin D2. Catalyzes the conversion of PGH2 to PGD2, a prostaglandin involved in smooth muscle contraction/relaxation and a potent inhibitor of platelet aggregation. Involved in a variety of CNS functions, such as sedation, NREM sleep and PGE2-induced allodynia, and may have an anti-apoptotic role in oligodendrocytes. Binds small non-substrate lipophilic molecules, including biliverdin, bilirubin, retinal, retinoic acid and thyroid hormone, and may act as a scavenger for harmful hydrophobic molecules and as a secretory retinoid and thyroid hormone transporter. Possibly involved in development and maintenance of the blood-brain, blood-retina, blood-aqueous humor and blood-testis barrier. It is likely to play important roles in both maturation and maintenance of the central nervous system and male reproductive system. Involved in PLA2G3-dependent maturation of mast cells. PLA2G3 is secreted by immature mast cells and acts on nearby fibroblasts upstream to PTDGS to synthesize PGD2, which in turn promotes mast cell maturation and degranulation via PTGDR. This Bos taurus (Bovine) protein is Prostaglandin-H2 D-isomerase (PTGDS).